Consider the following 309-residue polypeptide: Probable 3-hydroxyacyl-CoA dehydrogenase B0272.3 (309 aa).

It belongs to the 3-hydroxyacyl-CoA dehydrogenase family. In terms of assembly, homodimer.

The protein resides in the mitochondrion matrix. It catalyses the reaction a (3S)-3-hydroxyacyl-CoA + NAD(+) = a 3-oxoacyl-CoA + NADH + H(+). The protein operates within lipid metabolism; fatty acid beta-oxidation. In Caenorhabditis elegans, this protein is Probable 3-hydroxyacyl-CoA dehydrogenase B0272.3.